The primary structure comprises 147 residues: Cilia- and flagella-associated protein 90 (147 aa).

A disordered region spans residues 1–36; the sequence is MEDDEEETTASTLRGKPRPPPVSAQSAFSYIPPRRL.

As to quaternary structure, microtubule inner protein component of sperm flagellar doublet microtubules.

It localises to the cytoplasm. Its subcellular location is the cytoskeleton. The protein localises to the cilium axoneme. The protein resides in the flagellum axoneme. Its function is as follows. Microtubule inner protein (MIP) part of the dynein-decorated doublet microtubules (DMTs) in cilia axoneme, which is required for motile cilia beating. This Homo sapiens (Human) protein is Cilia- and flagella-associated protein 90.